The sequence spans 334 residues: Ferrochelatase (334 aa).

Fe cation is bound by residues H207 and E288.

This sequence belongs to the ferrochelatase family.

It is found in the cytoplasm. It catalyses the reaction heme b + 2 H(+) = protoporphyrin IX + Fe(2+). Its pathway is porphyrin-containing compound metabolism; protoheme biosynthesis; protoheme from protoporphyrin-IX: step 1/1. Its function is as follows. Catalyzes the ferrous insertion into protoporphyrin IX. The chain is Ferrochelatase from Helicobacter pylori (strain P12).